The chain runs to 270 residues: Undecaprenyl-diphosphatase 3 (270 aa).

Helical transmembrane passes span 5–25 (YYILKYLILGLFQGLTEPIPI), 42–62 (IEGFSFELLVNSASLLAVLLI), 89–109 (FFFIIYLVIATIPAGVIGVLF), 117–137 (LKGVKMVGISLLITAVGLWII), 192–212 (FSFLLYIPVSLGGLLLSITDI), 220–240 (TLFVPYIVAFIATFIMTYISL), and 250–270 (GNLKYFSFYCIIVGVLTLIFL).

Belongs to the UppP family.

It is found in the cell membrane. It catalyses the reaction di-trans,octa-cis-undecaprenyl diphosphate + H2O = di-trans,octa-cis-undecaprenyl phosphate + phosphate + H(+). Its function is as follows. Catalyzes the dephosphorylation of undecaprenyl diphosphate (UPP). Confers resistance to bacitracin. This chain is Undecaprenyl-diphosphatase 3, found in Bacillus anthracis.